Reading from the N-terminus, the 428-residue chain is Monocarboxylate transporter 13 (428 aa).

Over 1-10 (MVHRTEPPDG) the chain is Cytoplasmic. 12 helical membrane passes run 11–31 (GWGW…FGVL), 52–72 (VSWI…IGSA), 81–101 (PVVM…SFAT), 106–126 (LYLS…TPTL), 139–159 (LAMG…APLF), 172–192 (LLLV…LRPL), 221–241 (VALT…VAHL), 244–264 (LGWD…SDLV), 283–303 (LLML…VAQA), 309–329 (VLAV…FSVI), 338–358 (IYCG…LGAP), and 374–394 (FVVA…LPHF). At 395 to 428 (FSCISLSTSRPQDLVIEAPDTKIPLPKEEGLGEN) the chain is on the cytoplasmic side.

It belongs to the major facilitator superfamily. Monocarboxylate porter (TC 2.A.1.13) family.

It is found in the golgi apparatus membrane. Its subcellular location is the cell membrane. Its function is as follows. Proton-linked monocarboxylate transporter. May catalyze the transport of monocarboxylates across the plasma membrane. The sequence is that of Monocarboxylate transporter 13 (Slc16a13) from Rattus norvegicus (Rat).